A 160-amino-acid polypeptide reads, in one-letter code: Cytochrome b6-f complex subunit 4 (160 aa).

3 helical membrane passes run 36–56 (LLYI…GLAV), 95–115 (LLGV…PFIE), and 131–151 (AVFL…TFPI).

This sequence belongs to the cytochrome b family. PetD subfamily. The 4 large subunits of the cytochrome b6-f complex are cytochrome b6, subunit IV (17 kDa polypeptide, petD), cytochrome f and the Rieske protein, while the 4 small subunits are petG, petL, petM and petN. The complex functions as a dimer.

It is found in the plastid. The protein resides in the cyanelle thylakoid membrane. In terms of biological role, component of the cytochrome b6-f complex, which mediates electron transfer between photosystem II (PSII) and photosystem I (PSI), cyclic electron flow around PSI, and state transitions. The sequence is that of Cytochrome b6-f complex subunit 4 from Cyanophora paradoxa.